The chain runs to 163 residues: Large ribosomal subunit protein uL15 (163 aa).

It belongs to the universal ribosomal protein uL15 family. In terms of assembly, part of the 50S ribosomal subunit.

In terms of biological role, binds to the 23S rRNA. The sequence is that of Large ribosomal subunit protein uL15 from Orientia tsutsugamushi (strain Boryong) (Rickettsia tsutsugamushi).